The chain runs to 66 residues: MAFLKKSLFLVLFLGLVSLSICDEEKRQDEDDDDDDDEEKRGVFDIIKDAGRQLVAHAMGKIAEKV.

The first 22 residues, 1–22 (MAFLKKSLFLVLFLGLVSLSIC), serve as a signal peptide directing secretion. Positions 23–39 (DEEKRQDEDDDDDDDEE) are excised as a propeptide. Position 66 is a valine amide (V66).

As to expression, expressed by the skin glands.

The protein localises to the secreted. Has antibacterial activity against Gram-negative bacterium E.coli ATCC 25922 (MIC=300 uM) but not against S.pneumoniae ATCC 700603, S.choleraesuis ATCC 14028 or Gram-positive bacterium S.aureus ATCC 29313. Shows very little hemolytic activity and no cytotoxicity. This Leptodactylus pustulatus (Ceara white-lipped frog) protein is Ocellatin-PT5.